A 24-amino-acid chain; its full sequence is Cupiennin-5a (24 aa).

As to expression, expressed by the venom gland.

It localises to the secreted. This Cupiennius salei (American wandering spider) protein is Cupiennin-5a.